The primary structure comprises 516 residues: Bifunctional pantoate ligase/cytidylate kinase (516 aa).

The tract at residues 1–279 is pantoate--beta-alanine ligase; sequence MVRKIFQTNA…CGSTRLIDHT (279 aa). 29–36 contributes to the ATP binding site; the sequence is MGGLHPGH. The active-site Proton donor is the H36. A (R)-pantoate-binding site is contributed by Q64. Position 64 (Q64) interacts with beta-alanine. Residue 153 to 156 coordinates ATP; sequence GEKD. Q159 provides a ligand contact to (R)-pantoate. Residue 190-193 coordinates ATP; sequence YSSR. Residues 280-516 form a cytidylate kinase region; it reads FLMHRKPIIA…PEEVWPTPNS (237 aa).

The protein in the N-terminal section; belongs to the pantothenate synthetase family. This sequence in the C-terminal section; belongs to the cytidylate kinase family. Type 1 subfamily.

The protein localises to the cytoplasm. It catalyses the reaction (R)-pantoate + beta-alanine + ATP = (R)-pantothenate + AMP + diphosphate + H(+). It carries out the reaction CMP + ATP = CDP + ADP. The catalysed reaction is dCMP + ATP = dCDP + ADP. It functions in the pathway cofactor biosynthesis; (R)-pantothenate biosynthesis; (R)-pantothenate from (R)-pantoate and beta-alanine: step 1/1. Its function is as follows. Catalyzes the condensation of pantoate with beta-alanine in an ATP-dependent reaction via a pantoyl-adenylate intermediate. Functionally, catalyzes the transfer of a phosphate group from ATP to either CMP or dCMP to form CDP or dCDP and ADP, respectively. The chain is Bifunctional pantoate ligase/cytidylate kinase from Prochlorococcus marinus (strain NATL2A).